The sequence spans 247 residues: Dof zinc finger protein DOF3.5 (247 aa).

A Dof-type zinc finger spans residues 25-79 (PSCPRCGSSNTKFCYYNNYSLTQPRYFCKGCRRYWTKGGSLRNVPVGGGCRKSRR). The Zn(2+) site is built by C27, C30, C52, and C55. The disordered stretch occupies residues 70 to 100 (VGGGCRKSRRPKSSSGNNTKTSLTANSGNPG). Positions 82-94 (SSSGNNTKTSLTA) are enriched in polar residues.

It is found in the nucleus. Its function is as follows. Transcription factor that binds specifically to a 5'-AA[AG]G-3' consensus core sequence. The polypeptide is Dof zinc finger protein DOF3.5 (DOF3.5) (Arabidopsis thaliana (Mouse-ear cress)).